We begin with the raw amino-acid sequence, 147 residues long: UPF0260 protein PMI1174 (147 aa).

Belongs to the UPF0260 family.

The chain is UPF0260 protein PMI1174 from Proteus mirabilis (strain HI4320).